A 285-amino-acid polypeptide reads, in one-letter code: Pantothenate synthetase (285 aa).

30 to 37 (MGFLHEGH) serves as a coordination point for ATP. His37 serves as the catalytic Proton donor. Gln61 provides a ligand contact to (R)-pantoate. Gln61 contacts beta-alanine. 147–150 (GQKD) provides a ligand contact to ATP. Gln153 provides a ligand contact to (R)-pantoate. ATP-binding positions include Val176 and 184–187 (KSSR).

The protein belongs to the pantothenate synthetase family. In terms of assembly, homodimer.

The protein localises to the cytoplasm. It catalyses the reaction (R)-pantoate + beta-alanine + ATP = (R)-pantothenate + AMP + diphosphate + H(+). It participates in cofactor biosynthesis; (R)-pantothenate biosynthesis; (R)-pantothenate from (R)-pantoate and beta-alanine: step 1/1. Functionally, catalyzes the condensation of pantoate with beta-alanine in an ATP-dependent reaction via a pantoyl-adenylate intermediate. This chain is Pantothenate synthetase, found in Listeria innocua serovar 6a (strain ATCC BAA-680 / CLIP 11262).